A 352-amino-acid chain; its full sequence is D-alanine--D-alanine ligase A (352 aa).

Residues K138–E341 form the ATP-grasp domain. ATP is bound at residue E165–E220. Mg(2+) contacts are provided by D295, E308, and N310.

The protein belongs to the D-alanine--D-alanine ligase family. The cofactor is Mg(2+). Requires Mn(2+) as cofactor.

It localises to the cytoplasm. The enzyme catalyses 2 D-alanine + ATP = D-alanyl-D-alanine + ADP + phosphate + H(+). The protein operates within cell wall biogenesis; peptidoglycan biosynthesis. Cell wall formation. The chain is D-alanine--D-alanine ligase A from Pseudomonas putida (strain ATCC 47054 / DSM 6125 / CFBP 8728 / NCIMB 11950 / KT2440).